A 322-amino-acid polypeptide reads, in one-letter code: Ferredoxin--NADP reductase (322 aa).

Asp-34, Gln-42, Tyr-47, Val-87, Phe-120, Asp-279, and Thr-320 together coordinate FAD.

The protein belongs to the ferredoxin--NADP reductase type 2 family. As to quaternary structure, homodimer. Requires FAD as cofactor.

The catalysed reaction is 2 reduced [2Fe-2S]-[ferredoxin] + NADP(+) + H(+) = 2 oxidized [2Fe-2S]-[ferredoxin] + NADPH. In Streptococcus pneumoniae serotype 19F (strain G54), this protein is Ferredoxin--NADP reductase.